The sequence spans 229 residues: MSRAGNGGRQRIKTAKGRSASSIKWIQRQLNDPYVRKAQAEGYRSRAAYKLIELDERFHFLRGAKRVIDLGIAPGGWTQVVRRVCPQAAIVGIDLLPTDPIDGAIILQMDFMSDEAPAQLAEALGGPADIVLSDMAANTVGHQQTDHLRTMALVEAGCLFASEVLRPGGTYVAKVLAGGADHGLVAELKRLFTTVKHAKPPASRKDSSEWYVIAQGFKGRPEAAGADGE.

The segment at Met1 to Ala20 is disordered. S-adenosyl-L-methionine-binding residues include Gly75, Trp77, Asp94, Asp110, and Asp134. Lys174 serves as the catalytic Proton acceptor.

Belongs to the class I-like SAM-binding methyltransferase superfamily. RNA methyltransferase RlmE family.

The protein resides in the cytoplasm. It catalyses the reaction uridine(2552) in 23S rRNA + S-adenosyl-L-methionine = 2'-O-methyluridine(2552) in 23S rRNA + S-adenosyl-L-homocysteine + H(+). In terms of biological role, specifically methylates the uridine in position 2552 of 23S rRNA at the 2'-O position of the ribose in the fully assembled 50S ribosomal subunit. The protein is Ribosomal RNA large subunit methyltransferase E of Rhizorhabdus wittichii (strain DSM 6014 / CCUG 31198 / JCM 15750 / NBRC 105917 / EY 4224 / RW1) (Sphingomonas wittichii).